Reading from the N-terminus, the 337-residue chain is Putative carbonic anhydrase-like protein 2 (337 aa).

Positions 1–16 are cleaved as a signal peptide; the sequence is MIPWLLTACIYPCVIG. An Alpha-carbonic anhydrase domain is found at 17 to 274; it reads PDFWGLLHGD…LNGRLVRTNI (258 aa). The active site involves Y140. N-linked (GlcNAc...) asparagine glycosylation occurs at N188. A substrate-binding site is contributed by 212-213; it reads TF.

It belongs to the alpha-carbonic anhydrase family.

It localises to the secreted. This chain is Putative carbonic anhydrase-like protein 2 (cah-2), found in Caenorhabditis elegans.